The primary structure comprises 39 residues: Hementin (39 aa).

It depends on a divalent metal cation as a cofactor. As to expression, expressed mainly in the posterior salivary glands and, to a lesser extent, in the anterior salivary glands and secreted into the proboscis (at protein level).

Its subcellular location is the secreted. Its activity is regulated as follows. Inhibited by EDTA, cysteine, DTT and sodium phosphate. Partially inhibited by EGTA, citrate, Tris and glycine. Not inhibited by DFP, PMSF, iodoacetic acid and leupeptin. Requires sodium chloride concentrations higher than 0.15 M for activity. In terms of biological role, metalloprotease with anticoagulant activity. Cleaves fibrinogen Aalpha (FGA), gamma (FGG) and Bbeta (FGB) chains after positions 'Asn-121', 'Lys-160' and 'Pro-102', respectively. Breaks down cross-linked and non-cross-linked fibrin clots. Prevents and reverts platelet aggregation induced by ADP and collagen. Prevents thrombin-induced platelet clotting. Does not affect plasma levels of coagulation factors prothrombin (F2), V (F5), VII (F7), VIII (F8), IX (F9), X (F10), XI (F11), XII (F12), plasma kallikrein (KLKB1) and kininogen-1 (KNG1). The polypeptide is Hementin (Haementeria ghilianii (Amazon leech)).